We begin with the raw amino-acid sequence, 631 residues long: MLIFMYLYVCVCTCTCAFSLCSTNVVMNYSEIESKVREATNDDPWGPSGQLMGEIAKATFMYEQFPELMNMLWSRMLKDNKKNWRRVYKSLLLLAYLIRNGSERVVTSAREHIYDLRSLENYHFVDEHGKDQGINIRQKVKELVEFAQDDDRLREERKKAKKNKDKYVGVSSDSVGGFRYNERYDPEPKSKWDEEWDKNKSAFPFSDKLGELSDKIGSTIDDTISKFRRKDREDSPERCSDSDEEKKARRGRSPKGEFKDEEETVTTKHIHITQATETTTTRHKRTANPSKTIDLGAAAHYTGDKASPDQNASTHTPQSSAKPSVPSSKSSGDLVDLFDGSSQSAGGSADLFGGFADFGSAAASGNFPSQATSGNGDFGDWSAFNQAPSGPVASGGELFGSAPQSAVELISASQPALGPPPAASNSADLFDLMGSSQATMTSSQSMNFSLMSTNTVGLGLPMSRSQNTDMVQKSASKTLPSTWSDPSVNISLDNLLPGMQPSKPQQPSLNTMIQQQNMQQPLNVMTQSFGAVNLSSPSNMLPVRPQTNPLLGGPMPMNMPGVMTGTMGMAPLGNSAGMSQGMVGMNMNMGMSASGMGLSGTMGMGMPSMAMPSGTVQPKQDAFANFANFSK.

The region spanning 24-157 (NVVMNYSEIE…QDDDRLREER (134 aa)) is the ENTH domain. A 1,2-diacyl-sn-glycero-3-phospho-(1D-myo-inositol-4,5-bisphosphate) is bound at residue arginine 37. Positions 60–62 (FMY) are interaction with VTI1B. A 1,2-diacyl-sn-glycero-3-phospho-(1D-myo-inositol-4,5-bisphosphate) is bound at residue arginine 75. Interaction with VTI1B regions lie at residues 102–104 (SER) and 150–161 (DDRLREERKKAK). Serine 171, serine 174, serine 213, serine 218, serine 235, serine 253, and serine 307 each carry phosphoserine. The interval 227–339 (FRRKDREDSP…SSGDLVDLFD (113 aa)) is disordered. The span at 230 to 247 (KDREDSPERCSDSDEEKK) shows a compositional bias: basic and acidic residues. Over residues 308-318 (PDQNASTHTPQ) the composition is skewed to polar residues. Threonine 316 carries the phosphothreonine modification. The segment covering 319-331 (SSAKPSVPSSKSS) has biased composition (low complexity). Residues serine 320 and serine 630 each carry the phosphoserine modification.

It belongs to the epsin family. In terms of assembly, binds clathrin heavy chain and AP-2. Interacts with VTI1B. Interacts with GGA2 (via GAE domain). Interacts with AP1G1 (via GAE domain). Interacts with AP1G2 (via GAE domain).

The protein localises to the cytoplasm. The protein resides in the perinuclear region. It is found in the membrane. It localises to the cytoplasmic vesicle. Its subcellular location is the clathrin-coated vesicle. Its function is as follows. Binds to membranes enriched in phosphatidylinositol 4,5-bisphosphate (PtdIns(4,5)P2). May have a role in transport via clathrin-coated vesicles from the trans-Golgi network to endosomes. Stimulates clathrin assembly. The sequence is that of Clathrin interactor 1 (Clint1) from Mus musculus (Mouse).